The sequence spans 237 residues: 2-C-methyl-D-erythritol 4-phosphate cytidylyltransferase (237 aa).

This sequence belongs to the IspD/TarI cytidylyltransferase family. IspD subfamily.

The catalysed reaction is 2-C-methyl-D-erythritol 4-phosphate + CTP + H(+) = 4-CDP-2-C-methyl-D-erythritol + diphosphate. The protein operates within isoprenoid biosynthesis; isopentenyl diphosphate biosynthesis via DXP pathway; isopentenyl diphosphate from 1-deoxy-D-xylulose 5-phosphate: step 2/6. Its function is as follows. Catalyzes the formation of 4-diphosphocytidyl-2-C-methyl-D-erythritol from CTP and 2-C-methyl-D-erythritol 4-phosphate (MEP). This is 2-C-methyl-D-erythritol 4-phosphate cytidylyltransferase from Acaryochloris marina (strain MBIC 11017).